The sequence spans 102 residues: Small ribosomal subunit protein uS10 (102 aa).

Belongs to the universal ribosomal protein uS10 family. Part of the 30S ribosomal subunit.

Involved in the binding of tRNA to the ribosomes. The polypeptide is Small ribosomal subunit protein uS10 (Bacillus thuringiensis (strain Al Hakam)).